The chain runs to 367 residues: Heme A synthase (367 aa).

Transmembrane regions (helical) follow at residues 25-45 (ALRL…LVGG), 111-131 (LIAR…WLTG), 139-159 (WPLV…WWMV), 174-194 (LATH…IMRG), and 210-230 (GFAA…ALVA). His-274 serves as a coordination point for heme. Helical transmembrane passes span 276–296 (IGAY…LRAA), 305–325 (AVVL…TLLM), and 327–347 (VPLH…GFAV). His-335 contacts heme.

Belongs to the COX15/CtaA family. Type 2 subfamily. In terms of assembly, interacts with CtaB. Requires heme b as cofactor.

The protein localises to the cell membrane. The catalysed reaction is Fe(II)-heme o + 2 A + H2O = Fe(II)-heme a + 2 AH2. The protein operates within porphyrin-containing compound metabolism; heme A biosynthesis; heme A from heme O: step 1/1. Its function is as follows. Catalyzes the conversion of heme O to heme A by two successive hydroxylations of the methyl group at C8. The first hydroxylation forms heme I, the second hydroxylation results in an unstable dihydroxymethyl group, which spontaneously dehydrates, resulting in the formyl group of heme A. The protein is Heme A synthase of Rhizobium etli (strain CIAT 652).